The primary structure comprises 271 residues: Glutamate racemase (271 aa).

Residues 10 to 11 (DS) and 42 to 43 (YG) contribute to the substrate site. C73 acts as the Proton donor/acceptor in catalysis. 74 to 75 (NT) lines the substrate pocket. C183 (proton donor/acceptor) is an active-site residue. 184–185 (TH) is a binding site for substrate.

It belongs to the aspartate/glutamate racemases family.

The catalysed reaction is L-glutamate = D-glutamate. It functions in the pathway cell wall biogenesis; peptidoglycan biosynthesis. Provides the (R)-glutamate required for cell wall biosynthesis. The polypeptide is Glutamate racemase (Lactococcus lactis subsp. cremoris (strain SK11)).